Consider the following 114-residue polypeptide: MAEITSAKAMARTVRVSPRKTRLVLDLIRGKNVADAIAILKFTPNKAARVIEKTLNSAIANAENNFGLEKANLVVSETFANEGPTMKRFRPRAKGSASPINKRTTHVTVVVSEK.

It belongs to the universal ribosomal protein uL22 family. As to quaternary structure, part of the 50S ribosomal subunit.

In terms of biological role, this protein binds specifically to 23S rRNA; its binding is stimulated by other ribosomal proteins, e.g. L4, L17, and L20. It is important during the early stages of 50S assembly. It makes multiple contacts with different domains of the 23S rRNA in the assembled 50S subunit and ribosome. Functionally, the globular domain of the protein is located near the polypeptide exit tunnel on the outside of the subunit, while an extended beta-hairpin is found that lines the wall of the exit tunnel in the center of the 70S ribosome. The chain is Large ribosomal subunit protein uL22 from Streptococcus agalactiae serotype Ia (strain ATCC 27591 / A909 / CDC SS700).